Reading from the N-terminus, the 206-residue chain is LysM and putative peptidoglycan-binding domain-containing protein 2 (206 aa).

The LysM domain maps to 59 to 103 (IEHCLSPSDTLQGIALKYGVTMEQIKRANKLFSTDCIFLRKSLNI). Residues 184-206 (AQRLKEEDDLRHDGSYATCSYQH) form a disordered region. The span at 186 to 197 (RLKEEDDLRHDG) shows a compositional bias: basic and acidic residues.

This chain is LysM and putative peptidoglycan-binding domain-containing protein 2 (lysmd2), found in Xenopus laevis (African clawed frog).